The primary structure comprises 337 residues: D-alanine--D-alanine ligase (337 aa).

In terms of domain architecture, ATP-grasp spans 124 to 330 (KMWFSALGIP…FTEYLSLVIN (207 aa)). Residue 154–209 (ALAQWGSIFVKAASQGSSVGCYKVDDSDKVAGVLKDAFGYAPYVIVEKTIKARELE) participates in ATP binding. Positions 284, 297, and 299 each coordinate Mg(2+).

This sequence belongs to the D-alanine--D-alanine ligase family. Mg(2+) serves as cofactor. Requires Mn(2+) as cofactor.

Its subcellular location is the cytoplasm. The catalysed reaction is 2 D-alanine + ATP = D-alanyl-D-alanine + ADP + phosphate + H(+). The protein operates within cell wall biogenesis; peptidoglycan biosynthesis. Cell wall formation. The chain is D-alanine--D-alanine ligase from Shewanella baltica (strain OS195).